The primary structure comprises 391 residues: S-adenosylmethionine synthase (391 aa).

Residue His19 participates in ATP binding. Asp21 provides a ligand contact to Mg(2+). Residue Glu47 coordinates K(+). Glu60 and Gln103 together coordinate L-methionine. The interval 103-113 (QSPDIAQGVDR) is flexible loop. Residues 168 to 170 (DGK), 236 to 237 (RF), Asp245, 251 to 252 (RK), Ala268, and Lys272 each bind ATP. Asp245 serves as a coordination point for L-methionine. Lys276 is an L-methionine binding site.

Belongs to the AdoMet synthase family. Homotetramer; dimer of dimers. Requires Mg(2+) as cofactor. The cofactor is K(+).

Its subcellular location is the cytoplasm. The enzyme catalyses L-methionine + ATP + H2O = S-adenosyl-L-methionine + phosphate + diphosphate. It participates in amino-acid biosynthesis; S-adenosyl-L-methionine biosynthesis; S-adenosyl-L-methionine from L-methionine: step 1/1. Its function is as follows. Catalyzes the formation of S-adenosylmethionine (AdoMet) from methionine and ATP. The overall synthetic reaction is composed of two sequential steps, AdoMet formation and the subsequent tripolyphosphate hydrolysis which occurs prior to release of AdoMet from the enzyme. The polypeptide is S-adenosylmethionine synthase (Oleidesulfovibrio alaskensis (strain ATCC BAA-1058 / DSM 17464 / G20) (Desulfovibrio alaskensis)).